Reading from the N-terminus, the 71-residue chain is Sec-independent protein translocase protein TatA (71 aa).

Residues 1–21 (MGSFSMWHWLIVLAIVLLLFG) form a helical membrane-spanning segment. The tract at residues 40–71 (KKGMSDDDTAPDGTPKPADQSKTVDHRADDHK) is disordered. Basic and acidic residues predominate over residues 61–71 (KTVDHRADDHK).

This sequence belongs to the TatA/E family. In terms of assembly, the Tat system comprises two distinct complexes: a TatABC complex, containing multiple copies of TatA, TatB and TatC subunits, and a separate TatA complex, containing only TatA subunits. Substrates initially bind to the TatABC complex, which probably triggers association of the separate TatA complex to form the active translocon.

It localises to the cell inner membrane. Part of the twin-arginine translocation (Tat) system that transports large folded proteins containing a characteristic twin-arginine motif in their signal peptide across membranes. TatA could form the protein-conducting channel of the Tat system. This chain is Sec-independent protein translocase protein TatA, found in Allorhizobium ampelinum (strain ATCC BAA-846 / DSM 112012 / S4) (Agrobacterium vitis (strain S4)).